A 392-amino-acid polypeptide reads, in one-letter code: MEVAIVAAQRTAIGSFGGGLAKIPAPELGATVIKALLEKTGVKPEDVSEVILGQVLTAGSGQNPARQALIKAGLPVTTPATTLNVVCGSGLRAVHLAAQAILAGDADIVIAGGQESMSLSPHILPGSRDGFRMGNAQLVDTMVNDGLTDAYNAYHMGITAENVAAKYGIGREEQDAFSLQSQQRAAAAQKAGKFRDEIVPVLVPQRKGDPLAFDADEFIKHDASADGLAKLRPAFKKDGTVTAGNASGINDGAAAVLLMSTQKADQLGLKPLAIIKGYALTGCEPEIMGIGPVSATRKALSKAGWTVEDLDLVEANEAFAAQALGVAKELGWGSDKVNVNGGAIALGHPIGASGCRVLVTLLHEMQRRGAKKGLATLCIGGGMGVALAVERP.

The active-site Acyl-thioester intermediate is Cys87. Catalysis depends on proton acceptor residues His348 and Cys378.

This sequence belongs to the thiolase-like superfamily. Thiolase family.

Its subcellular location is the cytoplasm. The enzyme catalyses 2 acetyl-CoA = acetoacetyl-CoA + CoA. It functions in the pathway metabolic intermediate biosynthesis; (R)-mevalonate biosynthesis; (R)-mevalonate from acetyl-CoA: step 1/3. Involved in the production of polyhydroxyalkonic acids (PHAs), composed primarily of 3-hydroxybutyric acid (3HB) and 3-hydroxyvaleric acid (3HV). The polypeptide is Acetyl-CoA acetyltransferase (phaA) (Chromobacterium violaceum (strain ATCC 12472 / DSM 30191 / JCM 1249 / CCUG 213 / NBRC 12614 / NCIMB 9131 / NCTC 9757 / MK)).